The sequence spans 666 residues: Protein OPG074 (666 aa).

The helical transmembrane segment at 574-596 (VVIFFNTIIEYIVATIYYRLAVL) threads the bilayer.

The protein belongs to the orthopoxvirus OPG074 family.

Its subcellular location is the membrane. In Homo sapiens (Human), this protein is Protein OPG074 (OPG074).